The primary structure comprises 271 residues: DNA repair protein RecO (271 aa).

The disordered stretch occupies residues 248–271 (AVGVEDSVRQDGDRDSTTRTPSSA). A compositionally biased stretch (basic and acidic residues) spans 253–264 (DSVRQDGDRDST).

This sequence belongs to the RecO family.

Its function is as follows. Involved in DNA repair and RecF pathway recombination. This is DNA repair protein RecO from Rhodococcus opacus (strain B4).